A 339-amino-acid polypeptide reads, in one-letter code: Non-homologous end joining protein Ku (339 aa).

A Ku domain is found at 10–187 (ITFGLVNIPV…LPKATTGKPT (178 aa)). Disordered regions lie at residues 230–251 (DSGK…RQGA) and 263–339 (SLGQ…KHAA). Over residues 267–277 (RGKEDKEDATP) the composition is skewed to basic and acidic residues. Basic residues predominate over residues 278–289 (ARRKAPARHAAA). Residues 290–310 (RKQPAAKRAATPPAKRASTAA) are compositionally biased toward low complexity.

It belongs to the prokaryotic Ku family. As to quaternary structure, homodimer. Interacts with LigD.

In terms of biological role, with LigD forms a non-homologous end joining (NHEJ) DNA repair enzyme, which repairs dsDNA breaks with reduced fidelity. Binds linear dsDNA with 5'- and 3'- overhangs but not closed circular dsDNA nor ssDNA. Recruits and stimulates the ligase activity of LigD. In Cupriavidus necator (strain ATCC 17699 / DSM 428 / KCTC 22496 / NCIMB 10442 / H16 / Stanier 337) (Ralstonia eutropha), this protein is Non-homologous end joining protein Ku.